A 178-amino-acid chain; its full sequence is Large ribosomal subunit protein bL25 (178 aa).

This sequence belongs to the bacterial ribosomal protein bL25 family. CTC subfamily. As to quaternary structure, part of the 50S ribosomal subunit; part of the 5S rRNA/L5/L18/L25 subcomplex. Contacts the 5S rRNA. Binds to the 5S rRNA independently of L5 and L18.

Functionally, this is one of the proteins that binds to the 5S RNA in the ribosome where it forms part of the central protuberance. This Sulfurimonas denitrificans (strain ATCC 33889 / DSM 1251) (Thiomicrospira denitrificans (strain ATCC 33889 / DSM 1251)) protein is Large ribosomal subunit protein bL25.